Consider the following 141-residue polypeptide: MALKTATSGMWMTDDCKKSFMEMKWKKVHRYVVYKLEEKSRKVTVDKVGAAGESYDDLAASLPEDDCRYAVFDFDYVTVDNCRMSKIFFITWSPEASRIREKMMYATSKSGLRRVLDGVHYELQATDPTEMGFDKIQDRAK.

S8 is subject to Phosphoserine. Residues 8–141 form the ADF-H domain; that stretch reads SGMWMTDDCK…GFDKIQDRAK (134 aa).

It belongs to the actin-binding proteins ADF family.

It localises to the cytoplasm. It is found in the cytoskeleton. Does not display typical F-actin depolymerizing activity. Exhibits a high ability to stabilize and cross-link actin filaments. Functions as an actin bundling protein with the highest efficiency under acidic conditions. May play a role in the modulation of levels of histone H3 lysine 4 trimethylation and H3 lysine 9 and 14 acetylation at the FLC locus. The chain is Actin-depolymerizing factor 9 (ADF9) from Arabidopsis thaliana (Mouse-ear cress).